Reading from the N-terminus, the 521-residue chain is Cytochrome P450 1A1 (521 aa).

Phe229 contacts substrate. Cys463 provides a ligand contact to heme.

The protein belongs to the cytochrome P450 family. Heme is required as a cofactor.

The protein localises to the endoplasmic reticulum membrane. The protein resides in the microsome membrane. The enzyme catalyses an organic molecule + reduced [NADPH--hemoprotein reductase] + O2 = an alcohol + oxidized [NADPH--hemoprotein reductase] + H2O + H(+). In terms of biological role, cytochromes P450 are a group of heme-thiolate monooxygenases. They oxidize a variety of structurally unrelated compounds, including steroids, fatty acids, and xenobiotics. This Opsanus tau (Oyster toadfish) protein is Cytochrome P450 1A1 (cyp1a1).